We begin with the raw amino-acid sequence, 43 residues long: Cytochrome b559 subunit beta (43 aa).

Residues tryptophan 18–glycine 34 form a helical membrane-spanning segment. Histidine 22 is a binding site for heme.

Belongs to the PsbE/PsbF family. In terms of assembly, heterodimer of an alpha subunit and a beta subunit. PSII is composed of 1 copy each of membrane proteins PsbA, PsbB, PsbC, PsbD, PsbE, PsbF, PsbH, PsbI, PsbJ, PsbK, PsbL, PsbM, PsbT, PsbX, PsbY, PsbZ, Psb30/Ycf12, at least 3 peripheral proteins of the oxygen-evolving complex and a large number of cofactors. It forms dimeric complexes. Heme b serves as cofactor.

Its subcellular location is the plastid. It localises to the chloroplast thylakoid membrane. In terms of biological role, this b-type cytochrome is tightly associated with the reaction center of photosystem II (PSII). PSII is a light-driven water:plastoquinone oxidoreductase that uses light energy to abstract electrons from H(2)O, generating O(2) and a proton gradient subsequently used for ATP formation. It consists of a core antenna complex that captures photons, and an electron transfer chain that converts photonic excitation into a charge separation. In Phaeodactylum tricornutum (strain CCAP 1055/1), this protein is Cytochrome b559 subunit beta.